A 430-amino-acid chain; its full sequence is Phosphomethylpyrimidine synthase 2 (430 aa).

Substrate contacts are provided by residues Asn66, Met95, Tyr124, His164, 186 to 188 (SRG), 227 to 230 (DGFR), and Glu266. Residue His270 coordinates Zn(2+). Tyr293 lines the substrate pocket. Zn(2+) is bound at residue His334. Positions 411, 414, and 418 each coordinate [4Fe-4S] cluster.

This sequence belongs to the ThiC family. Homodimer. It depends on [4Fe-4S] cluster as a cofactor.

It catalyses the reaction 5-amino-1-(5-phospho-beta-D-ribosyl)imidazole + S-adenosyl-L-methionine = 4-amino-2-methyl-5-(phosphooxymethyl)pyrimidine + CO + 5'-deoxyadenosine + formate + L-methionine + 3 H(+). The protein operates within cofactor biosynthesis; thiamine diphosphate biosynthesis. In terms of biological role, catalyzes the synthesis of the hydroxymethylpyrimidine phosphate (HMP-P) moiety of thiamine from aminoimidazole ribotide (AIR) in a radical S-adenosyl-L-methionine (SAM)-dependent reaction. The polypeptide is Phosphomethylpyrimidine synthase 2 (Syntrophotalea carbinolica (strain DSM 2380 / NBRC 103641 / GraBd1) (Pelobacter carbinolicus)).